The following is a 1356-amino-acid chain: MEHQLSPILSEIPPTVPVINGEPMCPVENYLLDPNAMAVCSNHSQIMTQHKMYNTWTCPQYWSQIVFVQVNPGEILTIKADDGSIQNIQGPADVPLIAPTGNLPPIYLPPGYMSQVVEENGIQKIVIVPQTLDYHVPMTAPVQQPFVAAPLLTYPQAPQLLYSPVQGEIPVPSYIQEPQQIPPLPLLPPLPLLPPAATFLFQEHLETYPQGRVNHNQFDERTVKIGEYSKKKIRDRQLGEHKINSTFSDTTLLLNKDIDMPAPPDSLCPYTVDTAPGTNTDNSTSDTYSLNTVLNTCTIDSAPRNMADNIPDTNTTDTITSSSAHTPSISTSNATFCSDNNNNITDSSISNYNQVTYDETHKPPDAKSIPSCTSQSASNPSVSENAHNPSSINDGLRPSDVASISENDHEETEANMGAGDNKQILGENQKKSQSSNASLKEHNTEDRTQPGCFNIEKPVVSNIQTRSATVSWTRKSNEKYDINSSMTHELALSSNGKNGTYKNIYTGNGVTVVLHDLQPCMVYFLRVTTIRNAEHRSVSEVVSFTTPGCEPDPPLAPTLISRTKNSLSLQWKASNDNGSKISSFLLEWDEGKGEDFKSCYSGRLKQHKLFKLNPSTKYSFRLAAKNDFGCSNFSETAVFYTSGKTPPAPLPPKLKEAGIYSLSLEWCAPTNPNPNDTLTYVLEMEEAKSGLGFKPKYNGEDLTCTIRNLQRNTMYKFRIFAYNLEGRSNPSGEVKYTTRPARPGCPNKPYVVGTIHAHQVTIGWDLPKDNGGMNISSYSLEVCENSDSANLWKIIYSGTRQEFLYDDLQAATTYKLRVFCTSPAGQSRPSDVLTIQTPTLPPESCRSQPLRGKTKSKDANLPDNRSVNGKPEAHVRGKKAKGPHQDRKVHPSSEKKCALGSQSMECGSVPARHPPSQCGTPVLTCKGPTCVIVSWEIPKCNGAEIIDYRLQWGQVEDSMHLIYTGPCLRYEVKGLVPATTYFCRVQAVNIVGVGMFGGTAKVTTPGTVPAMVPVLKEVESKVPAKLSSTCIAIRWEEPDCHGSPITGYNIEYGDKKVVTVKRITEYVLKDLQPNTTYRIRIQAINHYGLSPFSPSIRCKTKPLPPEPPQLNCVVYGHQSLRLKWGTVSSKKTLANFINYNVLMEDRSGRFSVIYRGPDVTHKVQKLSEYTEYKFKIQACNEAGEGPESDIYTFTTTKSPPTALKAPKVHPLNNNSCEIKWESLEPIKGDPIVYCLQVTTGKKANQIYKGPNTSFSFSNYHANSRYRFKVCAGRRYETSNGLQELWGPYSPSALFSTYKHHSGHGKGSGSKGKGNHNDKGEKCKTEMSDDTFVLTLLIGFALIAVLCAVAVQYLLIN.

3 disordered regions span residues 303-341 (PRNM…SDNN), 356-402 (TYDE…SDVA), and 428-452 (NQKK…QPGC). Residues 308–341 (DNIPDTNTTDTITSSSAHTPSISTSNATFCSDNN) are compositionally biased toward low complexity. The segment covering 370–393 (PSCTSQSASNPSVSENAHNPSSIN) has biased composition (polar residues). The segment covering 439-448 (LKEHNTEDRT) has biased composition (basic and acidic residues). Fibronectin type-III domains follow at residues 454-549 (NIEK…TPGC), 553-648 (PPLA…TPPA), 650-741 (LPPK…TRPA), and 745-842 (CPNK…TLPP). A compositionally biased stretch (polar residues) spans 825-838 (GQSRPSDVLTIQTP). Positions 825–894 (GQSRPSDVLT…QDRKVHPSSE (70 aa)) are disordered. Over residues 883–894 (PHQDRKVHPSSE) the composition is skewed to basic and acidic residues. Fibronectin type-III domains follow at residues 914–1007 (PPSQ…TPGT), 1017–1103 (EVES…TKPL), 1104–1199 (PPEP…TKSP), and 1202–1299 (ALKA…TYKH). Residues 1299–1320 (HHSGHGKGSGSKGKGNHNDKGE) are disordered. Residues 1330-1350 (TFVLTLLIGFALIAVLCAVAV) form a helical membrane-spanning segment. Over 1351 to 1356 (QYLLIN) the chain is Cytoplasmic.

Belongs to the FNDC3 family.

Its subcellular location is the membrane. The polypeptide is Fibronectin type III domain containing protein 3C1 (Fndc3c1) (Mus musculus (Mouse)).